Here is a 293-residue protein sequence, read N- to C-terminus: MSALDNRLFAKMNGIGNEIVVVDLRDQPAPVTPADARAVAAHVPYDQLMLLQPARLPGTEAFVRIYNNDGSESGACGNGMRCVARQMFAGSDKNGLTFETRAGLLNCWRGPADGLYTVDMGEPKFGWQDIPLAEEFRDTRMIELQIGPIDAPVLHTPSVVSMGNPHAIFWVDDVNAYDLGRFGPLLENHPIFPERANITLAHIVDRQHITMRTWERGAGLTKACGSAACATAVAAARLKRTDRTVEMTLPGGQLTIEWRDNDNHVLMTGGAEFEFEGRFDPALFAGALDPTGA.

Substrate is bound by residues asparagine 17, glutamine 47, and asparagine 67. Residue cysteine 76 is the Proton donor of the active site. Substrate-binding positions include 77 to 78 (GN), asparagine 164, asparagine 197, and 215 to 216 (ER). Cysteine 224 acts as the Proton acceptor in catalysis. 225–226 (GS) is a substrate binding site.

The protein belongs to the diaminopimelate epimerase family. In terms of assembly, homodimer.

The protein resides in the cytoplasm. The enzyme catalyses (2S,6S)-2,6-diaminopimelate = meso-2,6-diaminopimelate. It participates in amino-acid biosynthesis; L-lysine biosynthesis via DAP pathway; DL-2,6-diaminopimelate from LL-2,6-diaminopimelate: step 1/1. Functionally, catalyzes the stereoinversion of LL-2,6-diaminopimelate (L,L-DAP) to meso-diaminopimelate (meso-DAP), a precursor of L-lysine and an essential component of the bacterial peptidoglycan. This chain is Diaminopimelate epimerase, found in Rhodopseudomonas palustris (strain TIE-1).